The chain runs to 220 residues: Iron-sulfur cluster repair protein YtfE (220 aa).

This sequence belongs to the RIC family. YtfE subfamily. Homodimer.

Its subcellular location is the cytoplasm. In terms of biological role, di-iron-containing protein involved in the repair of iron-sulfur clusters damaged by oxidative and nitrosative stress conditions. This Salmonella choleraesuis (strain SC-B67) protein is Iron-sulfur cluster repair protein YtfE.